The sequence spans 294 residues: Ribosomal protein L11 methyltransferase (294 aa).

S-adenosyl-L-methionine contacts are provided by Thr145, Gly167, Asp189, and Asn230.

The protein belongs to the methyltransferase superfamily. PrmA family.

Its subcellular location is the cytoplasm. The catalysed reaction is L-lysyl-[protein] + 3 S-adenosyl-L-methionine = N(6),N(6),N(6)-trimethyl-L-lysyl-[protein] + 3 S-adenosyl-L-homocysteine + 3 H(+). Methylates ribosomal protein L11. The sequence is that of Ribosomal protein L11 methyltransferase from Alkalilimnicola ehrlichii (strain ATCC BAA-1101 / DSM 17681 / MLHE-1).